A 253-amino-acid chain; its full sequence is Imidazole glycerol phosphate synthase subunit HisF (253 aa).

Catalysis depends on residues Asp-11 and Asp-130.

The protein belongs to the HisA/HisF family. In terms of assembly, heterodimer of HisH and HisF.

It is found in the cytoplasm. The enzyme catalyses 5-[(5-phospho-1-deoxy-D-ribulos-1-ylimino)methylamino]-1-(5-phospho-beta-D-ribosyl)imidazole-4-carboxamide + L-glutamine = D-erythro-1-(imidazol-4-yl)glycerol 3-phosphate + 5-amino-1-(5-phospho-beta-D-ribosyl)imidazole-4-carboxamide + L-glutamate + H(+). The protein operates within amino-acid biosynthesis; L-histidine biosynthesis; L-histidine from 5-phospho-alpha-D-ribose 1-diphosphate: step 5/9. Functionally, IGPS catalyzes the conversion of PRFAR and glutamine to IGP, AICAR and glutamate. The HisF subunit catalyzes the cyclization activity that produces IGP and AICAR from PRFAR using the ammonia provided by the HisH subunit. The chain is Imidazole glycerol phosphate synthase subunit HisF from Clostridium beijerinckii (strain ATCC 51743 / NCIMB 8052) (Clostridium acetobutylicum).